A 427-amino-acid chain; its full sequence is Dihydroorotase (427 aa).

Zn(2+) is bound by residues histidine 58 and histidine 60. Substrate is bound by residues 60–62 (HLR) and asparagine 92. Zn(2+) contacts are provided by aspartate 150, histidine 177, and histidine 230. Residue asparagine 276 coordinates substrate. Aspartate 303 contributes to the Zn(2+) binding site. Residue aspartate 303 is part of the active site. Substrate is bound by residues histidine 307 and 321–322 (FG).

It belongs to the metallo-dependent hydrolases superfamily. DHOase family. Class I DHOase subfamily. Requires Zn(2+) as cofactor.

It carries out the reaction (S)-dihydroorotate + H2O = N-carbamoyl-L-aspartate + H(+). Its pathway is pyrimidine metabolism; UMP biosynthesis via de novo pathway; (S)-dihydroorotate from bicarbonate: step 3/3. In terms of biological role, catalyzes the reversible cyclization of carbamoyl aspartate to dihydroorotate. The chain is Dihydroorotase from Macrococcus caseolyticus (strain JCSC5402) (Macrococcoides caseolyticum).